The chain runs to 328 residues: uncharacterized protein (328 aa).

A signal peptide spans Met1 to Ala24.

This sequence belongs to the bacterial solute-binding protein 7 family.

The protein localises to the periplasm. This is an uncharacterized protein from Haemophilus influenzae (strain ATCC 51907 / DSM 11121 / KW20 / Rd).